A 213-amino-acid polypeptide reads, in one-letter code: N-(5'-phosphoribosyl)anthranilate isomerase (213 aa).

The protein belongs to the TrpF family.

The enzyme catalyses N-(5-phospho-beta-D-ribosyl)anthranilate = 1-(2-carboxyphenylamino)-1-deoxy-D-ribulose 5-phosphate. Its pathway is amino-acid biosynthesis; L-tryptophan biosynthesis; L-tryptophan from chorismate: step 3/5. The protein is N-(5'-phosphoribosyl)anthranilate isomerase of Rhodopseudomonas palustris (strain TIE-1).